Here is a 241-residue protein sequence, read N- to C-terminus: Probable transcriptional regulatory protein Maqu_2154 (241 aa).

This sequence belongs to the TACO1 family.

Its subcellular location is the cytoplasm. In Marinobacter nauticus (strain ATCC 700491 / DSM 11845 / VT8) (Marinobacter aquaeolei), this protein is Probable transcriptional regulatory protein Maqu_2154.